Reading from the N-terminus, the 611-residue chain is Chaperone protein DnaK (611 aa).

At Thr-173 the chain carries Phosphothreonine; by autocatalysis. Positions 579–592 (AAGQAEGAQGAQDA) are enriched in low complexity. Residues 579 to 598 (AAGQAEGAQGAQDAGAKKDN) form a disordered region.

Belongs to the heat shock protein 70 family.

Its function is as follows. Acts as a chaperone. The chain is Chaperone protein DnaK from Bacillus cereus (strain ATCC 10987 / NRS 248).